Here is an 88-residue protein sequence, read N- to C-terminus: Small ribosomal subunit protein uS15 (88 aa).

It belongs to the universal ribosomal protein uS15 family. As to quaternary structure, part of the 30S ribosomal subunit. Forms a bridge to the 50S subunit in the 70S ribosome, contacting the 23S rRNA.

Its function is as follows. One of the primary rRNA binding proteins, it binds directly to 16S rRNA where it helps nucleate assembly of the platform of the 30S subunit by binding and bridging several RNA helices of the 16S rRNA. Functionally, forms an intersubunit bridge (bridge B4) with the 23S rRNA of the 50S subunit in the ribosome. This is Small ribosomal subunit protein uS15 from Acidovorax sp. (strain JS42).